A 342-amino-acid chain; its full sequence is Voltage-gated hydrogen channel 1 (342 aa).

Disordered regions lie at residues 1 to 20 and 74 to 102; these read MEGD…INPN and FNDN…SEQK. The Cytoplasmic segment spans residues 1–148; sequence MEGDNCNKSR…KLRHILHSKP (148 aa). Polar residues predominate over residues 86 to 102; the sequence is QEQSTQNTMISMQSEQK. A helical membrane pass occupies residues 149–169; sequence IHVAIIVLVVLDSFLVVGELL. Residues 170 to 185 are Extracellular-facing; it reads IDLKVIIVPHGNPAPE. Residues 186–208 form a helical membrane-spanning segment; sequence ILHGFSLSILSIFMVEIALKIIA. At 209-217 the chain is on the cytoplasmic side; that stretch reads DHRHFIHHK. Residues 218–238 form a helical membrane-spanning segment; that stretch reads VEVLDAVVVVISFGVDIALIF. At 239–247 the chain is on the extracellular side; that stretch reads VGESEALAA. A helical transmembrane segment spans residues 248–268; it reads IGLLVILRLWRVFRIINGIIV. The Cytoplasmic portion of the chain corresponds to 269 to 342; the sequence is TVKTKADDRV…HSTTTASADV (74 aa). Residues 271–315 adopt a coiled-coil conformation; sequence KTKADDRVHEIKKKNSELELQIHNLEEKLSQKEQDMSRLHEILRC.

It belongs to the hydrogen channel family. As to quaternary structure, homodimer.

Its subcellular location is the membrane. It localises to the cell membrane. Less sensitive to zinc ions as compared to the mammalian homologs. Mediates the voltage-dependent proton permeability of excitable membranes. Forms a proton-selective channel through which protons may pass in accordance with their electrochemical gradient. The protein is Voltage-gated hydrogen channel 1 (HVCN1) of Ciona intestinalis (Transparent sea squirt).